The sequence spans 418 residues: MSIEIPAGLTELLQGFTVEVLRHQPADLLEFALQHFTRLQEENERKGTARFGHEGRTWGDAGAAGGGGTPSKGVNFAEEPRHSDSENGEEEEEEAADAGAFNAPVINRFTRRASVCAEAYNPDEEEDDAESRIIHPKTDDQRNRLQEACKDILLFKNLDPEQMSQVLDAMFEKLVKEGEHVIDQGDDGDNFYVIDRGTFDIYVKCDGVGRCVGNYDNRGSFGELALMYNTPRAATITATSPGALWGLDRVTFRRIIVKNNAKKRKMYESFIESLPFLKSLEVSERLKVVDVIGTKVYNDGEQIIAQGDSADSFFIVESGEVKITMKRKGKSEVEENGAVEIARCSRGQYFGELALVTNKPRAASAHAIGTVKCLAMDVQAFERLLGPCMEIMKRNIATYEEQLVALFGTNMDIVEPTA.

Residues 2–153 are dimerization and phosphorylation; it reads SIEIPAGLTE…RLQEACKDIL (152 aa). Positions 45–57 are enriched in basic and acidic residues; it reads RKGTARFGHEGRT. A disordered region spans residues 45–98; sequence RKGTARFGHEGRTWGDAGAAGGGGTPSKGVNFAEEPRHSDSENGEEEEEEAADA. Residue Thr-69 is modified to Phosphothreonine. Ser-83 and Ser-85 each carry phosphoserine. The segment covering 86 to 96 has biased composition (acidic residues); sequence ENGEEEEEEAA. A Phosphoserine modification is found at Ser-114. Residues 154–275, Glu-223, Arg-232, 276–418, Glu-352, and Arg-361 each bind 3',5'-cyclic AMP; these read LFKN…ESLP and FLKS…EPTA.

The protein belongs to the cAMP-dependent kinase regulatory chain family. In terms of assembly, the inactive form of the enzyme is composed of two regulatory chains and two catalytic chains. Activation by cAMP produces two active catalytic monomers and a regulatory dimer that binds four cAMP molecules. Interacts with PRKACA and PRKACB. Interacts with the phosphorylated form of PJA2. Forms a complex composed of PRKAR2B, GSK3B and GSKIP through GSKIP interaction; facilitates PKA-induced phosphorylation and regulates GSK3B activity. Post-translationally, phosphorylated by the activated catalytic chain. In terms of tissue distribution, four types of regulatory chains are found: I-alpha, I-beta, II-alpha, and II-beta. Their expression varies among tissues and is in some cases constitutive and in others inducible.

It is found in the cytoplasm. The protein localises to the cell membrane. Functionally, regulatory subunit of the cAMP-dependent protein kinases involved in cAMP signaling in cells. Type II regulatory chains mediate membrane association by binding to anchoring proteins, including the MAP2 kinase. This is cAMP-dependent protein kinase type II-beta regulatory subunit (PRKAR2B) from Bos taurus (Bovine).